The chain runs to 481 residues: Pre-mRNA-splicing factor sap114 (481 aa).

Polar residues predominate over residues 1–15 (MSSLMEFQDRNTTNN). The segment at 1–34 (MSSLMEFQDRNTTNNETEHQKSITDQSSSVPAGV) is disordered. SURP motif repeat units follow at residues 44-86 (IIDK…HPYY) and 147-189 (VLRL…YPYF). Disordered regions lie at residues 335 to 373 (PSLA…QKPV) and 452 to 481 (GVEI…NKRR). Composition is skewed to polar residues over residues 345-368 (ISST…TQPK) and 467-481 (ATQS…NKRR).

Belongs to the 40S cdc5-associated complex (or cwf complex), a spliceosome sub-complex reminiscent of a late-stage spliceosome composed of the U2, U5 and U6 snRNAs and at least brr2, cdc5, cwf2/prp3, cwf3/syf1, cwf4/syf3, cwf5/ecm2, spp42/cwf6, cwf7/spf27, cwf8, cwf9, cwf10, cwf11, cwf12, prp45/cwf13, cwf14, cwf15, cwf16, cwf17, cwf18, cwf19, cwf20, cwf21, cwf22, cwf23, cwf24, cwf25, cwf26, cyp7/cwf27, cwf28, cwf29/ist3, lea1, msl1, prp5/cwf1, prp10, prp12/sap130, prp17, prp22, sap61, sap62, sap114, sap145, slu7, smb1, smd1, smd3, smf1, smg1 and syf2.

The protein resides in the nucleus. Functionally, involved in pre-mRNA splicing. May be involved in endoplasmic reticulum-associated protein degradation (ERAD) and required for growth at low and high temperatures. The chain is Pre-mRNA-splicing factor sap114 (sap114) from Schizosaccharomyces pombe (strain 972 / ATCC 24843) (Fission yeast).